Consider the following 151-residue polypeptide: D-aminoacyl-tRNA deacylase (151 aa).

The short motif at 138-139 (GP) is the Gly-cisPro motif, important for rejection of L-amino acids element.

The protein belongs to the DTD family. In terms of assembly, homodimer.

It is found in the cytoplasm. The enzyme catalyses glycyl-tRNA(Ala) + H2O = tRNA(Ala) + glycine + H(+). The catalysed reaction is a D-aminoacyl-tRNA + H2O = a tRNA + a D-alpha-amino acid + H(+). An aminoacyl-tRNA editing enzyme that deacylates mischarged D-aminoacyl-tRNAs. Also deacylates mischarged glycyl-tRNA(Ala), protecting cells against glycine mischarging by AlaRS. Acts via tRNA-based rather than protein-based catalysis; rejects L-amino acids rather than detecting D-amino acids in the active site. By recycling D-aminoacyl-tRNA to D-amino acids and free tRNA molecules, this enzyme counteracts the toxicity associated with the formation of D-aminoacyl-tRNA entities in vivo and helps enforce protein L-homochirality. The polypeptide is D-aminoacyl-tRNA deacylase (Picosynechococcus sp. (strain ATCC 27264 / PCC 7002 / PR-6) (Agmenellum quadruplicatum)).